A 226-amino-acid polypeptide reads, in one-letter code: Cytidylate kinase (226 aa).

Residue 10–18 (GPASSGKST) participates in ATP binding.

The protein resides in the cytoplasm. The enzyme catalyses CMP + ATP = CDP + ADP. It catalyses the reaction dCMP + ATP = dCDP + ADP. In Streptococcus pyogenes serotype M6 (strain ATCC BAA-946 / MGAS10394), this protein is Cytidylate kinase.